The primary structure comprises 207 residues: Large ribosomal subunit protein uL4 (207 aa).

It belongs to the universal ribosomal protein uL4 family. Part of the 50S ribosomal subunit.

Functionally, one of the primary rRNA binding proteins, this protein initially binds near the 5'-end of the 23S rRNA. It is important during the early stages of 50S assembly. It makes multiple contacts with different domains of the 23S rRNA in the assembled 50S subunit and ribosome. In terms of biological role, forms part of the polypeptide exit tunnel. This chain is Large ribosomal subunit protein uL4, found in Geobacter sulfurreducens (strain ATCC 51573 / DSM 12127 / PCA).